A 226-amino-acid chain; its full sequence is Uracil-DNA glycosylase (226 aa).

The active-site Proton acceptor is Asp-64.

This sequence belongs to the uracil-DNA glycosylase (UDG) superfamily. UNG family.

It is found in the cytoplasm. It carries out the reaction Hydrolyzes single-stranded DNA or mismatched double-stranded DNA and polynucleotides, releasing free uracil.. Excises uracil residues from the DNA which can arise as a result of misincorporation of dUMP residues by DNA polymerase or due to deamination of cytosine. The polypeptide is Uracil-DNA glycosylase (Vibrio parahaemolyticus serotype O3:K6 (strain RIMD 2210633)).